A 440-amino-acid polypeptide reads, in one-letter code: Putative sodium-coupled neutral amino acid transporter 8 (440 aa).

11 consecutive transmembrane segments (helical) span residues 29 to 49 (AIFI…PWAF), 58 to 78 (AIMV…ILGY), 100 to 120 (IGKL…VAFL), 156 to 176 (FAIT…KEIS), 183 to 203 (ILGT…YYVM), 223 to 243 (MFSV…CVTI), 255 to 275 (WAAV…FTGI), 300 to 320 (VIIA…IILL), 350 to 370 (VVIT…VPDI), 373 to 393 (VISV…GLCL), and 418 to 438 (VVCG…EIIA).

This sequence belongs to the amino acid/polyamine transporter 2 family.

The protein localises to the membrane. Functionally, putative sodium-dependent amino acid/proton antiporter. The chain is Putative sodium-coupled neutral amino acid transporter 8 (slc38a8) from Xenopus tropicalis (Western clawed frog).